The sequence spans 603 residues: Granule-bound starch synthase 1, chloroplastic/amyloplastic (603 aa).

Residues 1–75 (MATITGSSMP…SEKSLGKIVC (75 aa)) constitute a chloroplast transit peptide. Residue Lys91 coordinates ADP-alpha-D-glucose.

It belongs to the glycosyltransferase 1 family. Bacterial/plant glycogen synthase subfamily. Expressed in pods and leaves. No expression in flowers or stipules.

Its subcellular location is the plastid. The protein localises to the chloroplast. It localises to the amyloplast. The catalysed reaction is an NDP-alpha-D-glucose + [(1-&gt;4)-alpha-D-glucosyl](n) = [(1-&gt;4)-alpha-D-glucosyl](n+1) + a ribonucleoside 5'-diphosphate + H(+). It functions in the pathway glycan biosynthesis; starch biosynthesis. May be responsible for the synthesis of amylose. This chain is Granule-bound starch synthase 1, chloroplastic/amyloplastic, found in Pisum sativum (Garden pea).